We begin with the raw amino-acid sequence, 229 residues long: CRISPR pre-crRNA endoribonuclease Cas5d (229 aa).

The protein belongs to the CRISPR-associated protein Cas5 family. Subtype I-C/Dvulg subfamily. Requires Does not require a metal cofactor. as cofactor.

Its function is as follows. CRISPR (clustered regularly interspaced short palindromic repeat) is an adaptive immune system that provides protection against mobile genetic elements (viruses, transposable elements and conjugative plasmids). CRISPR clusters contain spacers, sequences complementary to antecedent mobile elements, and target invading nucleic acids. CRISPR clusters are transcribed and processed into CRISPR RNA (crRNA). This protein is a sequence-specific endonuclease that cleaves pre-crRNA into mature crRNA, possibly by an intramolecular attack of the 2'-hydroxyl group of G26 on the scissile phosphodiester, cutting the precursor 3' to G26 residue yielding 5'-hydroxyl and 2' and/or 3' ends lacking a hydroxyl group (perhaps a 2'/3' cyclic phosphodiester). Requires between 4 and 8 nt downstream of the cleavage site for both binding and cleavage of pre-crRNA. Substitution with dG at this position abolishes cleavage but not RNA binding. Does not cleave pre-crRNA associated with the M.succiniciproducens strain MBEL55E Cas5 protein (AC Q65TW5) CRISPR locus. This Thermus thermophilus (strain ATCC BAA-163 / DSM 7039 / HB27) protein is CRISPR pre-crRNA endoribonuclease Cas5d.